A 195-amino-acid chain; its full sequence is MDVKIGVLALQGDVAEHITAFQQVLDTIPSVVGSVVEVREAAQIPSLDAIAIPGGESTTISRLIEKNRMHEVLTGFQGGIFATCAGMVLMAKSVEDPRICPLGLIDMEVDRNAFGRQRESFEADIPVQGLDAPFHAVFIRAPVVRSVGAEATVLATIDQGIVAVLQGKHMALSFHPELAGDLRLHRLFLTGLGIV.

55–57 is a binding site for L-glutamine; it reads GES. The Nucleophile role is filled by cysteine 84. L-glutamine-binding positions include arginine 111 and 139 to 140; that span reads IR. Catalysis depends on charge relay system residues histidine 175 and glutamate 177.

This sequence belongs to the glutaminase PdxT/SNO family. In the presence of PdxS, forms a dodecamer of heterodimers. Only shows activity in the heterodimer.

It carries out the reaction aldehydo-D-ribose 5-phosphate + D-glyceraldehyde 3-phosphate + L-glutamine = pyridoxal 5'-phosphate + L-glutamate + phosphate + 3 H2O + H(+). The catalysed reaction is L-glutamine + H2O = L-glutamate + NH4(+). The protein operates within cofactor biosynthesis; pyridoxal 5'-phosphate biosynthesis. Catalyzes the hydrolysis of glutamine to glutamate and ammonia as part of the biosynthesis of pyridoxal 5'-phosphate. The resulting ammonia molecule is channeled to the active site of PdxS. This is Pyridoxal 5'-phosphate synthase subunit PdxT from Methanosphaerula palustris (strain ATCC BAA-1556 / DSM 19958 / E1-9c).